A 174-amino-acid polypeptide reads, in one-letter code: Crossover junction endodeoxyribonuclease RuvC (174 aa).

Active-site residues include Asp8, Glu67, and Asp139. Residues Asp8, Glu67, and Asp139 each contribute to the Mg(2+) site.

This sequence belongs to the RuvC family. Homodimer which binds Holliday junction (HJ) DNA. The HJ becomes 2-fold symmetrical on binding to RuvC with unstacked arms; it has a different conformation from HJ DNA in complex with RuvA. In the full resolvosome a probable DNA-RuvA(4)-RuvB(12)-RuvC(2) complex forms which resolves the HJ. It depends on Mg(2+) as a cofactor.

The protein localises to the cytoplasm. It catalyses the reaction Endonucleolytic cleavage at a junction such as a reciprocal single-stranded crossover between two homologous DNA duplexes (Holliday junction).. The RuvA-RuvB-RuvC complex processes Holliday junction (HJ) DNA during genetic recombination and DNA repair. Endonuclease that resolves HJ intermediates. Cleaves cruciform DNA by making single-stranded nicks across the HJ at symmetrical positions within the homologous arms, yielding a 5'-phosphate and a 3'-hydroxyl group; requires a central core of homology in the junction. The consensus cleavage sequence is 5'-(A/T)TT(C/G)-3'. Cleavage occurs on the 3'-side of the TT dinucleotide at the point of strand exchange. HJ branch migration catalyzed by RuvA-RuvB allows RuvC to scan DNA until it finds its consensus sequence, where it cleaves and resolves the cruciform DNA. This chain is Crossover junction endodeoxyribonuclease RuvC, found in Pseudoalteromonas translucida (strain TAC 125).